Reading from the N-terminus, the 350-residue chain is uncharacterized protein (350 aa).

One can recognise an OBG-type G domain in the interval 171–334 (PTVVIAGYPN…LKERLKKIAI (164 aa)). GTP-binding positions include 177–184 (GYPNVGKS), 219–223 (DTPGL), and 286–289 (NKID).

Belongs to the TRAFAC class OBG-HflX-like GTPase superfamily. OBG GTPase family. NOG subfamily.

This is an uncharacterized protein from Methanocaldococcus jannaschii (strain ATCC 43067 / DSM 2661 / JAL-1 / JCM 10045 / NBRC 100440) (Methanococcus jannaschii).